The chain runs to 625 residues: Cytochrome c oxidase subunit 1 (625 aa).

Residues 23–43 (IAIMYLIAGTLFFVKAGVMAL) traverse the membrane as a helical segment. Fe(II)-heme a is bound at residue H69. The next 6 membrane-spanning stretches (helical) occupy residues 72–92 (IMLF…VIPL), 99–119 (VAFP…GLLL), 151–171 (FYVL…INFL), 195–215 (FISS…LALL), 240–260 (IFWI…FGII), and 272–292 (LFGY…GFMV). H246 and Y250 together coordinate Cu cation. Residues 246–250 (HPEVY) constitute a cross-link (1'-histidyl-3'-tyrosine (His-Tyr)). Positions 295 and 296 each coordinate Cu cation. A run of 2 helical transmembrane segments spans residues 309-329 (IFAV…FNWL) and 343-363 (MLFA…GVML). H381 provides a ligand contact to heme a3. The next 5 membrane-spanning stretches (helical) occupy residues 382 to 402 (FHYI…FYWY), 417 to 437 (LFFW…HLLG), 460 to 480 (ISTI…INVI), 551 to 571 (SILP…LIML), and 577 to 597 (IINP…CMFV). Residue H383 coordinates Fe(II)-heme a.

The protein belongs to the heme-copper respiratory oxidase family.

It localises to the cell membrane. The catalysed reaction is 4 Fe(II)-[cytochrome c] + O2 + 8 H(+)(in) = 4 Fe(III)-[cytochrome c] + 2 H2O + 4 H(+)(out). It functions in the pathway energy metabolism; oxidative phosphorylation. In terms of biological role, cytochrome c oxidase is the component of the respiratory chain that catalyzes the reduction of oxygen to water. Subunits 1-3 form the functional core of the enzyme complex. CO I is the catalytic subunit of the enzyme. Electrons originating in cytochrome c are transferred via the copper A center of subunit 2 and heme A of subunit 1 to the bimetallic center formed by heme A3 and copper B. This chain is Cytochrome c oxidase subunit 1 (ctaD), found in Alkalihalophilus pseudofirmus (strain ATCC BAA-2126 / JCM 17055 / OF4) (Bacillus pseudofirmus).